Consider the following 475-residue polypeptide: MSPQTETKAGVGFKAGVKDYKLTYYTPDYETKDTDILAAFRVTPQPGVPPEEAGAAVAAESSTGTWTTVWTDGLTSLDRYKGRCYDIEPVAGEENQFIAYVAYPLDLFEEGSVTNMFTSIVGNVFGFKALRALRLEDLRIPPAYVKTFQGPPHGIQVERDKLNKYGRPLLGCTIKPKLGLSAKNYGRAVYECLRGGLDFTKDDENVNSQPFMRWRDRFLFCAEALYKAQAETGEIKGHYLNATAGTCEEMIKRAVFARELGVPIVMHDYLTGGFTANTSLAHYCRDNGLLLHIHRAMHAVIDRQKNHGIHFRVLAKALRMSGGDHIHSGTVVGKLEGERDITLGFVDLLRDDFVEKDRSRGIYFTQDWVSLPGVLPVASGGIHVWHMPALTEIFGDDSVLQFGGGTLGHPWGNAPGAVANRVALEACVQARNEGRDLAREGNEIIREASKWSPELAAACEVWKEIKFEFQAMDTL.

A propeptide spanning residues 1-2 (MS) is cleaved from the precursor. The residue at position 3 (Pro3) is an N-acetylproline. Residue Lys14 is modified to N6,N6,N6-trimethyllysine. Residues Asn123 and Thr173 each coordinate substrate. The Proton acceptor role is filled by Lys175. Position 177 (Lys177) interacts with substrate. Lys201, Asp203, and Glu204 together coordinate Mg(2+). Residue Lys201 is modified to N6-carboxylysine. His294 functions as the Proton acceptor in the catalytic mechanism. Substrate-binding residues include Arg295, His327, and Ser379.

The protein belongs to the RuBisCO large chain family. Type I subfamily. Heterohexadecamer of 8 large chains and 8 small chains; disulfide-linked. The disulfide link is formed within the large subunit homodimers. Mg(2+) is required as a cofactor. The disulfide bond which can form in the large chain dimeric partners within the hexadecamer appears to be associated with oxidative stress and protein turnover.

The protein localises to the plastid. It is found in the chloroplast. The enzyme catalyses 2 (2R)-3-phosphoglycerate + 2 H(+) = D-ribulose 1,5-bisphosphate + CO2 + H2O. The catalysed reaction is D-ribulose 1,5-bisphosphate + O2 = 2-phosphoglycolate + (2R)-3-phosphoglycerate + 2 H(+). In terms of biological role, ruBisCO catalyzes two reactions: the carboxylation of D-ribulose 1,5-bisphosphate, the primary event in carbon dioxide fixation, as well as the oxidative fragmentation of the pentose substrate in the photorespiration process. Both reactions occur simultaneously and in competition at the same active site. In Populus trichocarpa (Western balsam poplar), this protein is Ribulose bisphosphate carboxylase large chain.